A 171-amino-acid polypeptide reads, in one-letter code: uncharacterized protein (171 aa).

This is an uncharacterized protein from Bacillus subtilis (strain 168).